The following is a 181-amino-acid chain: Large ribosomal subunit protein uL6m (181 aa).

It belongs to the universal ribosomal protein uL6 family.

The protein localises to the mitochondrion. The sequence is that of Large ribosomal subunit protein uL6m (RPL6) from Acanthamoeba castellanii (Amoeba).